The primary structure comprises 105 residues: Phosphoribosyl-ATP pyrophosphatase (105 aa).

This sequence belongs to the PRA-PH family.

The protein localises to the cytoplasm. It catalyses the reaction 1-(5-phospho-beta-D-ribosyl)-ATP + H2O = 1-(5-phospho-beta-D-ribosyl)-5'-AMP + diphosphate + H(+). It functions in the pathway amino-acid biosynthesis; L-histidine biosynthesis; L-histidine from 5-phospho-alpha-D-ribose 1-diphosphate: step 2/9. In Methylococcus capsulatus (strain ATCC 33009 / NCIMB 11132 / Bath), this protein is Phosphoribosyl-ATP pyrophosphatase.